The primary structure comprises 209 residues: Transcription elongation factor A protein-like 4 (209 aa).

N-acetylmethionine is present on Met-1. Residues 1 to 125 (MEKLYNENEG…VPRKAKRKTN (125 aa)) are disordered. The segment covering 25–96 (QDERKPEVAC…GSEREGKPES (72 aa)) has biased composition (basic and acidic residues). Phosphoserine is present on residues Ser-88 and Ser-96.

The protein belongs to the TFS-II family. TFA subfamily.

It is found in the nucleus. In terms of biological role, may be involved in transcriptional regulation. This is Transcription elongation factor A protein-like 4 (TCEAL4) from Pongo abelii (Sumatran orangutan).